Here is a 205-residue protein sequence, read N- to C-terminus: Protein-L-isoaspartate O-methyltransferase (205 aa).

Residue S56 is part of the active site.

It belongs to the methyltransferase superfamily. L-isoaspartyl/D-aspartyl protein methyltransferase family.

It localises to the cytoplasm. It catalyses the reaction [protein]-L-isoaspartate + S-adenosyl-L-methionine = [protein]-L-isoaspartate alpha-methyl ester + S-adenosyl-L-homocysteine. Its function is as follows. Catalyzes the methyl esterification of L-isoaspartyl residues in peptides and proteins that result from spontaneous decomposition of normal L-aspartyl and L-asparaginyl residues. It plays a role in the repair and/or degradation of damaged proteins. The chain is Protein-L-isoaspartate O-methyltransferase from Pyrobaculum aerophilum (strain ATCC 51768 / DSM 7523 / JCM 9630 / CIP 104966 / NBRC 100827 / IM2).